The following is a 512-amino-acid chain: Kelch repeat protein C2 (512 aa).

The region spanning 2 to 67 (ESVIFSINGE…MRWKKINITI (66 aa)) is the BTB domain. The region spanning 102–176 (CIRMFNFSKR…LLKWIHKNPN (75 aa)) is the BACK domain. 6 Kelch repeats span residues 216 to 261 (IKHN…LHNC), 262 to 307 (LYII…VNDG), 309 to 354 (LYVI…FVND), 356 to 403 (IYVM…EYDG), 405 to 449 (IYAI…SCGD), and 452 to 498 (LIIA…THKS).

It belongs to the poxviruses Kelch family.

This Bos taurus (Bovine) protein is Kelch repeat protein C2.